Here is a 248-residue protein sequence, read N- to C-terminus: Small ribosomal subunit protein uS2 (248 aa).

Belongs to the universal ribosomal protein uS2 family.

This is Small ribosomal subunit protein uS2 from Dechloromonas aromatica (strain RCB).